Here is a 207-residue protein sequence, read N- to C-terminus: Ras-related protein RABH1d (207 aa).

Residue 16 to 23 (GDQSVGKT) coordinates GTP. The Effector region motif lies at 38–46 (YQATIGIDF). Residues 64–68 (DTAGQ), 122–125 (NKTD), and 152–153 (SA) contribute to the GTP site. Residues cysteine 205 and cysteine 207 are each lipidated (S-geranylgeranyl cysteine). Cysteine 207 bears the Cysteine methyl ester mark.

Belongs to the small GTPase superfamily. Rab family.

It localises to the golgi apparatus membrane. In terms of biological role, protein transport. Regulator of membrane traffic from the Golgi apparatus towards the endoplasmic reticulum (ER). The sequence is that of Ras-related protein RABH1d (RABH1D) from Arabidopsis thaliana (Mouse-ear cress).